Here is a 404-residue protein sequence, read N- to C-terminus: CinA-like protein (404 aa).

The protein belongs to the CinA family.

The protein is CinA-like protein of Deinococcus radiodurans (strain ATCC 13939 / DSM 20539 / JCM 16871 / CCUG 27074 / LMG 4051 / NBRC 15346 / NCIMB 9279 / VKM B-1422 / R1).